The following is a 1024-amino-acid chain: Unconventional myosin-Ig (1024 aa).

One can recognise a Myosin motor domain in the interval 15–713 (YGKPDFVLLD…TLVTLEQSRA (699 aa)). 108 to 115 (GESGAGKT) contacts ATP. The tract at residues 590–612 (MVALVENLASKEPFYVRCIKPNE) is actin-binding. The 30-residue stretch at 716–745 (IPIIVLLLQKAWRGTLARWHCRRLRAIYTI) folds into the IQ domain. In terms of domain architecture, TH1 spans 830–1023 (GLRQDWGCQR…RSTFTLLWPS (194 aa)). The interval 999-1024 (VEPRPEQPEPDFQSSRSTFTLLWPSH) is disordered.

This sequence belongs to the TRAFAC class myosin-kinesin ATPase superfamily. Myosin family. In terms of assembly, interacts with calmodulin; via its IQ motifs. As to expression, specifically expressed in hematopoietic cells. Detected in adult tissues of the immune system such as thymus, lymph nodes and spleen, but not in brain, lung, heart, liver, small intestine, testis and kidney (at protein level). Highly expressed in T-lymphocytes; constitutes the most highly expressed class I myosin in naive CD4 and CD8 T-cells. Also present in B-lymphocytes.

The protein localises to the cell membrane. It is found in the cell projection. It localises to the phagocytic cup. Unconventional myosin required during immune response for detection of rare antigen-presenting cells by regulating T-cell migration. Unconventional myosins are actin-based motor molecules with ATPase activity and serve in intracellular movements. Acts as a regulator of T-cell migration by generating membrane tension, enforcing cell-intrinsic meandering search, thereby enhancing detection of rare antigens during lymph-node surveillance, enabling pathogen eradication. Also required in B-cells, where it regulates different membrane/cytoskeleton-dependent processes. Involved in Fc-gamma receptor (Fc-gamma-R) phagocytosis. This is Unconventional myosin-Ig (Myo1g) from Mus musculus (Mouse).